Here is a 317-residue protein sequence, read N- to C-terminus: Peroxidase 64 (317 aa).

The first 22 residues, 1-22 (MNAHMLNLLVIVIFVVSFDVQA), serve as a signal peptide directing secretion. Cystine bridges form between Cys32/Cys111, Cys65/Cys70, Cys117/Cys313, and Cys195/Cys227. His63 functions as the Proton acceptor in the catalytic mechanism. Residues Asp64, Val67, Gly69, Asp71, and Ser73 each coordinate Ca(2+). Residue Pro158 participates in substrate binding. Asn163 carries an N-linked (GlcNAc...) asparagine glycan. Heme b is bound at residue His188. Position 189 (Thr189) interacts with Ca(2+). Residues Asp241, Thr243, and Asp248 each contribute to the Ca(2+) site.

The protein belongs to the peroxidase family. Classical plant (class III) peroxidase subfamily. Heme b serves as cofactor. Requires Ca(2+) as cofactor. In terms of tissue distribution, expressed in the whole plant, but preferentially in roots.

It is found in the secreted. The enzyme catalyses 2 a phenolic donor + H2O2 = 2 a phenolic radical donor + 2 H2O. Its function is as follows. Removal of H(2)O(2), oxidation of toxic reductants, biosynthesis and degradation of lignin, suberization, auxin catabolism, response to environmental stresses such as wounding, pathogen attack and oxidative stress. These functions might be dependent on each isozyme/isoform in each plant tissue. The sequence is that of Peroxidase 64 (PER64) from Arabidopsis thaliana (Mouse-ear cress).